The primary structure comprises 128 residues: DNA-directed RNA polymerase subunit omega (128 aa).

The segment at 87–106 (ARSSQAAPKSAPGQEIGKSF) is disordered.

The protein belongs to the RNA polymerase subunit omega family. The RNAP catalytic core consists of 2 alpha, 1 beta, 1 beta' and 1 omega subunit. When a sigma factor is associated with the core the holoenzyme is formed, which can initiate transcription.

The enzyme catalyses RNA(n) + a ribonucleoside 5'-triphosphate = RNA(n+1) + diphosphate. In terms of biological role, promotes RNA polymerase assembly. Latches the N- and C-terminal regions of the beta' subunit thereby facilitating its interaction with the beta and alpha subunits. The protein is DNA-directed RNA polymerase subunit omega of Anaplasma marginale (strain St. Maries).